Consider the following 167-residue polypeptide: UPF0225 protein VP1145 (167 aa).

This sequence belongs to the UPF0225 family.

The sequence is that of UPF0225 protein VP1145 from Vibrio parahaemolyticus serotype O3:K6 (strain RIMD 2210633).